A 345-amino-acid polypeptide reads, in one-letter code: Uroporphyrinogen decarboxylase (345 aa).

Residues 27–31, phenylalanine 46, aspartate 76, tyrosine 152, serine 207, and histidine 321 each bind substrate; that span reads RQAGR.

The protein belongs to the uroporphyrinogen decarboxylase family. Homodimer.

It localises to the cytoplasm. It catalyses the reaction uroporphyrinogen III + 4 H(+) = coproporphyrinogen III + 4 CO2. The protein operates within porphyrin-containing compound metabolism; protoporphyrin-IX biosynthesis; coproporphyrinogen-III from 5-aminolevulinate: step 4/4. In terms of biological role, catalyzes the decarboxylation of four acetate groups of uroporphyrinogen-III to yield coproporphyrinogen-III. The chain is Uroporphyrinogen decarboxylase from Staphylococcus aureus (strain bovine RF122 / ET3-1).